Here is a 381-residue protein sequence, read N- to C-terminus: MSSRIARALALVVTLLHLTRLALSTCPAACHCPLEAPKCAPGVGLVRDGCGCCKVCAKQLNEDCSKTQPCDHTKGLECNFGASSTALKGICRAQSEGRPCEYNSRIYQNGESFQPNCKHQCTCIDGAVGCIPLCPQELSLPNLGCPNPRLVKVSGQCCEEWVCDEDSIKDPMEDQDGLLGKELGFDASEVELTRNNELIAVGKGSSLKRLPVFGMEPRILYNPLQGQKCIVQTTSWSQCSKTCGTGISTRVTNDNPECRLVKETRICEVRPCGQPVYSSLKKGKKCSKTKKSPEPVRFTYAGCLSVKKYRPKYCGSCVDGRCCTPQLTRTVKMRFRCEDGETFSKNVMMIQSCKCNYNCPHANEAAFPFYRLFNDIHKFRD.

The N-terminal stretch at M1 to S24 is a signal peptide. One can recognise an IGFBP N-terminal domain in the interval T25–Q94. 6 cysteine pairs are disulfide-bonded: C26-C50, C30-C52, C32-C53, C39-C56, C64-C78, and C70-C91. In terms of domain architecture, VWFC spans R98 to D164. At S188 the chain carries Phosphoserine. Residues K228 to G273 enclose the TSP type-1 domain. Residues S279–G315 are heparin-binding. 5 disulfides stabilise this stretch: C286/C323, C303/C337, C314/C353, C317/C355, and C322/C359. One can recognise a CTCK domain in the interval C286–P360.

The protein belongs to the CCN family. In terms of assembly, interaction with integrins is heparin- and cell-type-dependent and promotes cell adhesion.

Its subcellular location is the secreted. In terms of biological role, promotes cell proliferation, chemotaxis, angiogenesis and cell adhesion. Appears to play a role in wound healing by up-regulating, in skin fibroblasts, the expression of a number of genes involved in angiogenesis, inflammation and matrix remodeling including VEGA-A, VEGA-C, MMP1, MMP3, TIMP1, uPA, PAI-1 and integrins alpha-3 and alpha-5. CCN1-mediated gene regulation is dependent on heparin-binding. Down-regulates the expression of alpha-1 and alpha-2 subunits of collagen type-1. Promotes cell adhesion and adhesive signaling through integrin alpha-6/beta-1, cell migration through integrin alpha-1/beta-5 and cell proliferation through integrin alpha-v/beta-3. This is CCN family member 1 (CCN1) from Pan troglodytes (Chimpanzee).